We begin with the raw amino-acid sequence, 107 residues long: uncharacterized protein (107 aa).

The next 2 helical transmembrane spans lie at cysteine 11 to isoleucine 31 and leucine 58 to glutamine 78.

The protein resides in the mitochondrion membrane. This is an uncharacterized protein from Saccharomyces cerevisiae (strain ATCC 204508 / S288c) (Baker's yeast).